The primary structure comprises 324 residues: Bacilliredoxin reductase Bdr (324 aa).

S-bacillithiol cysteine disulfide is present on Cys220.

In terms of assembly, interacts with BrxC. Requires FAD as cofactor. C-terminal Cys can react with bacillithiol (BSH) to form mixed disulfides. S-bacillithiolation protects Cys residues against overoxidation by acting as a redox switch in response to oxidative stress.

Its function is as follows. S-bacillithiolation is the formation of mixed disulfide bonds between protein thiols and the general thiol reductant bacillithiol (BSH) under oxidative stress. BSH is an equivalent of glutathione (GSH) in Firmicutes. This protein is a NADPH-dependent bacilliredoxin reductase, which debacillithiolates (removes BSH) the S-bacillithiolated BrxB (BrxB-SSB), and to a lesser extent BrxC (BrxC-SSB). Involved in a redox cascade increasing the efficacy of BrxB function by reducing BrxB-SSB and thus reactivating it. Has NADPH-dependent oxidase activity under aerobic conditions producing hydrogen peroxide (H(2)O(2)). The polypeptide is Bacilliredoxin reductase Bdr (Bacillus subtilis (strain 168)).